A 319-amino-acid polypeptide reads, in one-letter code: Beta-ketoacyl-[acyl-carrier-protein] synthase III (319 aa).

Residues Cys-114 and His-246 contribute to the active site. Positions 247 to 251 (QANIR) are ACP-binding. Residue Asn-276 is part of the active site.

Belongs to the thiolase-like superfamily. FabH family. As to quaternary structure, homodimer.

The protein localises to the cytoplasm. It carries out the reaction malonyl-[ACP] + acetyl-CoA + H(+) = 3-oxobutanoyl-[ACP] + CO2 + CoA. It functions in the pathway lipid metabolism; fatty acid biosynthesis. Functionally, catalyzes the condensation reaction of fatty acid synthesis by the addition to an acyl acceptor of two carbons from malonyl-ACP. Catalyzes the first condensation reaction which initiates fatty acid synthesis and may therefore play a role in governing the total rate of fatty acid production. Possesses both acetoacetyl-ACP synthase and acetyl transacylase activities. Its substrate specificity determines the biosynthesis of branched-chain and/or straight-chain of fatty acids. The sequence is that of Beta-ketoacyl-[acyl-carrier-protein] synthase III from Thiobacillus denitrificans (strain ATCC 25259 / T1).